A 700-amino-acid polypeptide reads, in one-letter code: MSGRRKGCSAATASSSSSSPPSRLPLPGHARRPRRKRCLVPEVFCTRDLADLCVRRDYEGLRRYLRRFEGSCVSLGWPSQCIYVVGGEHSPHSLTEIDLEHCQNDFFGEFRALHLIGTVSHATCRYQVFVDAYGAVFAYDAQEDCLYELASDLAGFFAKGMIRCDPVHESICARLQPNVPLVHPDHRAELCRRSRASARGRYLRSLLAFRELLACEDTAARCAYVEAHREAQLTLIWPEKHSLVLRTARDLGLSASMLRRFQRSLYTREPVMPLGEIEGAEDKTFFHRVRILCGDTGTVYAALVGQDKLVRLSRDLRGFVRVGLALLIDDFRYESIGPVDRSSLYEANPELRLPFKKRRLVVGYFDSLSSLYLRGQPKFSSIWRGLRDAWTHKRPKPRERASGVHLQRYVRATAGRWLPLCWPPLHGIMLGDTQYFGVVRDHKTYRRFSCLRQAGRLYFIGLVSVYECVPDANTAPEIWVSGHGHAFAYLPGEDKVYVLGLSFGEFFENGLFAVYSFFERDYVDEIVEGAWFKHTFAGMYELSQILHDRANLLRVCQLHAGSKIRLGGSPACTFTFGSWNVAEADEANNFVIGVLEQAHFVVIGWMEPVNKAVFMDAHGGIHVLLYGTMLVKLAETLRGFIRQGSFWFRCPRRFCFSPLDSSATVAAKPVSSHTSPAYDVSEYVFSGRSVLDSVSGTGAS.

Residues 1 to 30 (MSGRRKGCSAATASSSSSSPPSRLPLPGHA) are disordered. Residues 9–21 (SAATASSSSSSPP) show a composition bias toward low complexity.

This sequence belongs to the herpesviridae US22 family. As to quaternary structure, interacts with UL38 and host HDAC1; these interactions are necessary for the HDAC1 interaction with UL38. Interacts with host MTA2.

The protein localises to the virion. It localises to the host nucleus. The protein resides in the host cytoplasm. Contributes to activation of immediate-early gene expression. The protein is Protein UL29/28 (UL29) of Human cytomegalovirus (strain Merlin) (HHV-5).